The chain runs to 147 residues: Hemoglobin subunit beta (147 aa).

The Globin domain maps to 3–147 (EWTDKERSII…VVSALGKQYH (145 aa)). Heme b is bound by residues His64 and His93.

It belongs to the globin family. Heterotetramer of two alpha chains and two beta chains. As to expression, red blood cells.

In terms of biological role, involved in oxygen transport from gills to the various peripheral tissues. This Trematomus hansoni (Striped rockcod) protein is Hemoglobin subunit beta (hbb).